The sequence spans 396 residues: DnaJ homolog subfamily A member 1 (396 aa).

The J domain maps to 6-68 (TYYDVLGVKP…KKRELYDKGG (63 aa)). Residue K66 is modified to N6-acetyllysine. Position 83 is a phosphoserine (S83). The segment at 120-204 (GATRKLALQK…CNGRKIVREK (85 aa)) adopts a CR-type zinc-finger fold. Zn(2+) is bound by residues C133, C136, C149, C152, C176, C179, C192, and C195. CXXCXGXG motif repeat units lie at residues 133–140 (CDKCEGRG), 149–156 (CPNCRGTG), 176–183 (CMECQGHG), and 192–199 (CKSCNGRK). The residue at position 334 (S334) is a Phosphoserine. Residues 351 to 396 (VEETDEMDQVELVDFDPNQERRRHYNGEAYEDDEHHPRGGVQCQTS) are disordered. Positions 352 to 364 (EETDEMDQVELVD) are enriched in acidic residues. Y380 bears the Phosphotyrosine mark. C393 bears the Cysteine methyl ester mark. C393 carries S-farnesyl cysteine lipidation. Residues 394–396 (QTS) constitute a propeptide, removed in mature form.

As to quaternary structure, identified in a complex with HSPA1B and BAX. Interacts with RNF207.

It is found in the membrane. The protein localises to the cytoplasm. It localises to the microsome. Its subcellular location is the mitochondrion. The protein resides in the nucleus. It is found in the perinuclear region. Functionally, co-chaperone for HSPA8/Hsc70. Plays a role in protein transport into mitochondria via its role as co-chaperone. Functions as co-chaperone for HSPA1B and negatively regulates the translocation of BAX from the cytosol to mitochondria in response to cellular stress, thereby protecting cells against apoptosis. Stimulates ATP hydrolysis, but not the folding of unfolded proteins mediated by HSPA1A (in vitro). Promotes apoptosis in response to cellular stress mediated by exposure to anisomycin or UV. The protein is DnaJ homolog subfamily A member 1 (DNAJA1) of Pongo abelii (Sumatran orangutan).